Reading from the N-terminus, the 321-residue chain is Glucokinase (321 aa).

8 to 13 lines the ATP pocket; it reads GDVGGT.

It belongs to the bacterial glucokinase family.

It localises to the cytoplasm. The catalysed reaction is D-glucose + ATP = D-glucose 6-phosphate + ADP + H(+). This Erwinia tasmaniensis (strain DSM 17950 / CFBP 7177 / CIP 109463 / NCPPB 4357 / Et1/99) protein is Glucokinase.